We begin with the raw amino-acid sequence, 1026 residues long: DNA polymerase catalytic subunit (1026 aa).

A coiled-coil region spans residues 664-695; it reads LKTWLAKRKSIKKELEQCQDAKMKTILDKQQL.

It belongs to the DNA polymerase type-B family.

It is found in the host nucleus. The enzyme catalyses DNA(n) + a 2'-deoxyribonucleoside 5'-triphosphate = DNA(n+1) + diphosphate. Functionally, replicates viral genomic DNA. This chain is DNA polymerase catalytic subunit (9), found in Alcelaphine herpesvirus 1 (strain C500) (AlHV-1).